The sequence spans 314 residues: Leucotoxin LukE (314 aa).

The first 28 residues, 1 to 28 (MFKKKMLAASLSVGLIAPLASPIQESRA), serve as a signal peptide directing secretion.

Belongs to the aerolysin family. Toxicity requires sequential binding and synergistic association of a class S and a class F component which form heterooligomeric complexes. LukE (class S) associates with LukD (class F). LukE can also associate with HlgB.

The protein resides in the secreted. Part of a bi-component leucotoxin that acts by forming pores in the membrane of the target cells. LukE-LukD is as effective as the Panton-Valentine leucocidin (PVL) for inducing dermonecrosis when injected in the rabbit skin, but not hemolytic and poorly leucotoxic on human blood cells compared to other leucotoxins expressed by S.aureus. The polypeptide is Leucotoxin LukE (lukE) (Staphylococcus aureus).